A 661-amino-acid chain; its full sequence is NUAK family SNF1-like kinase 1 (661 aa).

At Met-1 the chain carries N-acetylmethionine. Residues 1–24 (MEGAAAPVAGDRPDLGLGAPGSPR) are disordered. At Ser-22 the chain carries Phosphoserine. The 252-residue stretch at 55–306 (YELQETLGKG…IEDIANHWWV (252 aa)) folds into the Protein kinase domain. ATP contacts are provided by residues 61-69 (LGKGTYGKV) and Lys-84. The Proton acceptor role is filled by Asp-178. Thr-211 is subject to Phosphothreonine; by LKB1. Disordered stretches follow at residues 345–421 (TEAK…EGVV) and 442–570 (LPSS…RPSS). Residues 393–404 (SSKRPKGILKKR) are compositionally biased toward basic residues. Residues 399-402 (GILK) carry the GILK motif motif. The residue at position 455 (Ser-455) is a Phosphoserine. Positions 518–529 (SCRRKGILKHSS) are enriched in basic residues. Position 600 is a phosphoserine; by PKB/AKT1 (Ser-600).

This sequence belongs to the protein kinase superfamily. CAMK Ser/Thr protein kinase family. SNF1 subfamily. As to quaternary structure, interacts (via GILK motif) with PPP1CB; the interaction is direct and bridges NUAK1 and PPP1R12A. Interacts with CDKN1A. It depends on Mg(2+) as a cofactor. Post-translationally, ubiquitinated with 'Lys-29'- and 'Lys-33'-linked polyubiquitins which appear to impede LKB1-mediated phosphorylation. Deubiquitinated by USP9X. In terms of processing, phosphorylated at Thr-211 by STK11/LKB1 in complex with STE20-related adapter-alpha (STRADA) pseudo kinase and CAB39. Not dephosphorylated by the myosin PP1 complex when regulating its activity, due to the presence of PPP1R12A, which prevents myosin PP1 from dephosphorylating NUAK1. Phosphorylated by STK38L upon stimulation with IGF1. In terms of tissue distribution, expressed at high levels in heart and brain, and at lower levels in skeletal muscle, kidney, ovary, placenta, lung and liver. Highly up-regulated in colorectal cancer cell lines.

It localises to the nucleus. The protein localises to the cytoplasm. It catalyses the reaction L-seryl-[protein] + ATP = O-phospho-L-seryl-[protein] + ADP + H(+). The enzyme catalyses L-threonyl-[protein] + ATP = O-phospho-L-threonyl-[protein] + ADP + H(+). Activated by phosphorylation on Thr-211. Activated by phosphorylation at Ser-600 AKT1 during glucose starvation; the relevance of such activation in normal cells is however unsure. In terms of biological role, serine/threonine-protein kinase involved in various processes such as cell adhesion, regulation of cell ploidy and senescence, cell proliferation and tumor progression. Phosphorylates ATM, CASP6, LATS1, PPP1R12A and p53/TP53. Acts as a regulator of cellular senescence and cellular ploidy by mediating phosphorylation of 'Ser-464' of LATS1, thereby controlling its stability. Controls cell adhesion by regulating activity of the myosin protein phosphatase 1 (PP1) complex. Acts by mediating phosphorylation of PPP1R12A subunit of myosin PP1: phosphorylated PPP1R12A then interacts with 14-3-3, leading to reduced dephosphorylation of myosin MLC2 by myosin PP1. May be involved in DNA damage response: phosphorylates p53/TP53 at 'Ser-15' and 'Ser-392' and is recruited to the CDKN1A/WAF1 promoter to participate in transcription activation by p53/TP53. May also act as a tumor malignancy-associated factor by promoting tumor invasion and metastasis under regulation and phosphorylation by AKT1. Suppresses Fas-induced apoptosis by mediating phosphorylation of CASP6, thereby suppressing the activation of the caspase and the subsequent cleavage of CFLAR. Regulates UV radiation-induced DNA damage response mediated by CDKN1A. In association with STK11, phosphorylates CDKN1A in response to UV radiation and contributes to its degradation which is necessary for optimal DNA repair. The chain is NUAK family SNF1-like kinase 1 (NUAK1) from Homo sapiens (Human).